Reading from the N-terminus, the 177-residue chain is Myosin regulatory light chain 2 (177 aa).

A compositionally biased stretch (basic residues) spans 1–16; that stretch reads MSRKSGSRSSSKRSKK. Residues 1-24 are disordered; the sequence is MSRKSGSRSSSKRSKKSGGGSNVF. IgE-binding epitope regions lie at residues 13-30, 22-48, 49-66, 58-90, 79-99, and 118-141; these read RSKK…FTQR, NVFD…DKDG, VIGK…GRIA, TFDE…LLNM, PAPI…TGES, and NIDC…QEAD. In terms of domain architecture, EF-hand 1 spans 30–65; that stretch reads RQVAEFKEGFQLMDRDKDGVIGKTDLRGTFDEIGRI. The Ca(2+) site is built by D43, D45, D47, and D54. One can recognise an EF-hand 2 domain in the interval 135-170; sequence FSSQEADDALDQMDIDDGGKIDVQGVIQMLTAGGGD.

In terms of assembly, myosin is a hexamer of 2 heavy chains and 4 light chains. Expressed in tail muscle (at protein level).

The protein is Myosin regulatory light chain 2 of Penaeus vannamei (Whiteleg shrimp).